The sequence spans 944 residues: Protein translocase subunit SecA (944 aa).

Residues Q96, 114–118, and D554 contribute to the ATP site; that span reads GEGKT.

It belongs to the SecA family. In terms of assembly, monomer and homodimer. Part of the essential Sec protein translocation apparatus which comprises SecA, SecYEG and auxiliary proteins SecDF. Other proteins may also be involved.

Its subcellular location is the cell inner membrane. It localises to the cytoplasm. The catalysed reaction is ATP + H2O + cellular proteinSide 1 = ADP + phosphate + cellular proteinSide 2.. In terms of biological role, part of the Sec protein translocase complex. Interacts with the SecYEG preprotein conducting channel. Has a central role in coupling the hydrolysis of ATP to the transfer of proteins into and across the cell membrane, serving as an ATP-driven molecular motor driving the stepwise translocation of polypeptide chains across the membrane. This Hydrogenobaculum sp. (strain Y04AAS1) protein is Protein translocase subunit SecA.